The following is a 490-amino-acid chain: Betaine aldehyde dehydrogenase (490 aa).

The K(+) site is built by I27 and D93. NAD(+) is bound at residue 150–152; sequence GAW. K162 functions as the Charge relay system in the catalytic mechanism. 176 to 179 contacts NAD(+); the sequence is KPSE. K(+) is bound at residue V180. NAD(+) is bound at residue 230-233; sequence GTDT. Position 246 (L246) interacts with K(+). E252 serves as the catalytic Proton acceptor. The NAD(+) site is built by G254, C286, and E387. C286 (nucleophile) is an active-site residue. C286 is subject to Cysteine sulfenic acid (-SOH). The K(+) site is built by K457 and G460. E464 (charge relay system) is an active-site residue.

The protein belongs to the aldehyde dehydrogenase family. As to quaternary structure, dimer of dimers. It depends on K(+) as a cofactor.

The enzyme catalyses betaine aldehyde + NAD(+) + H2O = glycine betaine + NADH + 2 H(+). Its pathway is amine and polyamine biosynthesis; betaine biosynthesis via choline pathway; betaine from betaine aldehyde: step 1/1. Its function is as follows. Involved in the biosynthesis of the osmoprotectant glycine betaine. Catalyzes the irreversible oxidation of betaine aldehyde to the corresponding acid. This is Betaine aldehyde dehydrogenase from Pseudomonas syringae pv. syringae (strain B728a).